The following is a 194-amino-acid chain: Imidazoleglycerol-phosphate dehydratase (194 aa).

It belongs to the imidazoleglycerol-phosphate dehydratase family.

The protein resides in the cytoplasm. It carries out the reaction D-erythro-1-(imidazol-4-yl)glycerol 3-phosphate = 3-(imidazol-4-yl)-2-oxopropyl phosphate + H2O. It participates in amino-acid biosynthesis; L-histidine biosynthesis; L-histidine from 5-phospho-alpha-D-ribose 1-diphosphate: step 6/9. The protein is Imidazoleglycerol-phosphate dehydratase of Lacticaseibacillus paracasei (strain ATCC 334 / BCRC 17002 / CCUG 31169 / CIP 107868 / KCTC 3260 / NRRL B-441) (Lactobacillus paracasei).